Consider the following 363-residue polypeptide: Flagellar P-ring protein 2 (363 aa).

The N-terminal stretch at 1–20 is a signal peptide; that stretch reads MKRIVLLLMSVALFSTAAQA.

Belongs to the FlgI family. In terms of assembly, the basal body constitutes a major portion of the flagellar organelle and consists of four rings (L,P,S, and M) mounted on a central rod.

It localises to the periplasm. It is found in the bacterial flagellum basal body. Assembles around the rod to form the L-ring and probably protects the motor/basal body from shearing forces during rotation. The chain is Flagellar P-ring protein 2 (flgI2) from Vibrio parahaemolyticus serotype O3:K6 (strain RIMD 2210633).